A 396-amino-acid chain; its full sequence is Putative glutamate--cysteine ligase 2-2 (396 aa).

The protein belongs to the glutamate--cysteine ligase type 2 family. YbdK subfamily.

It catalyses the reaction L-cysteine + L-glutamate + ATP = gamma-L-glutamyl-L-cysteine + ADP + phosphate + H(+). ATP-dependent carboxylate-amine ligase which exhibits weak glutamate--cysteine ligase activity. The protein is Putative glutamate--cysteine ligase 2-2 of Mycolicibacterium smegmatis (strain ATCC 700084 / mc(2)155) (Mycobacterium smegmatis).